The following is a 510-amino-acid chain: GPI mannosyltransferase 3 (510 aa).

7 helical membrane-spanning segments follow: residues 17–37 (TVLV…KTFF), 96–116 (IAPK…TWKL), 123–143 (PAEA…WFFL), 145–163 (RTFS…LNYW), 179–199 (LFIG…WAVL), 221–241 (VALV…EPVF), and 269–289 (YEAL…GLWI). N290 carries N-linked (GlcNAc...) asparagine glycosylation. 2 helical membrane passes run 316–336 (FIYP…TQTP) and 342–362 (WLVW…SQVH).

Belongs to the glycosyltransferase 22 family. PIGB subfamily.

Its subcellular location is the endoplasmic reticulum membrane. It functions in the pathway glycolipid biosynthesis; glycosylphosphatidylinositol-anchor biosynthesis. Its function is as follows. Mannosyltransferase involved in glycosylphosphatidylinositol-anchor biosynthesis. Transfers the third mannose to Man2-GlcN-acyl-PI during GPI precursor assembly. This is GPI mannosyltransferase 3 (GPI10) from Yarrowia lipolytica (strain CLIB 122 / E 150) (Yeast).